The primary structure comprises 1534 residues: DNA-directed RNA polymerase subunit beta'' (1534 aa).

Zn(2+)-binding residues include C220, C296, C303, and C306. Composition is skewed to basic and acidic residues over residues 644 to 668 and 678 to 688; these read RTQE…RTRE and PENKYRTREGE. Disordered stretches follow at residues 644–698 and 719–800; these read RTQE…EDEY and YRTL…KKEG. 2 stretches are compositionally biased toward acidic residues: residues 744–762 and 770–789; these read GEYE…SSED and TLEE…EYGS.

This sequence belongs to the RNA polymerase beta' chain family. RpoC2 subfamily. In terms of assembly, in plastids the minimal PEP RNA polymerase catalytic core is composed of four subunits: alpha, beta, beta', and beta''. When a (nuclear-encoded) sigma factor is associated with the core the holoenzyme is formed, which can initiate transcription. It depends on Zn(2+) as a cofactor.

It localises to the plastid. The protein resides in the chloroplast. The enzyme catalyses RNA(n) + a ribonucleoside 5'-triphosphate = RNA(n+1) + diphosphate. In terms of biological role, DNA-dependent RNA polymerase catalyzes the transcription of DNA into RNA using the four ribonucleoside triphosphates as substrates. The sequence is that of DNA-directed RNA polymerase subunit beta'' from Saccharum hybrid (Sugarcane).